The following is a 32-amino-acid chain: Cytochrome b6-f complex subunit 7 (32 aa).

The helical transmembrane segment at 9–27 (AVLSSVLVLVGLAIGFLLL) threads the bilayer.

Belongs to the PetM family. As to quaternary structure, the 4 large subunits of the cytochrome b6-f complex are cytochrome b6, subunit IV (17 kDa polypeptide, PetD), cytochrome f and the Rieske protein, while the 4 small subunits are PetG, PetL, PetM and PetN. The complex functions as a dimer.

Its subcellular location is the plastid. It localises to the chloroplast thylakoid membrane. Functionally, component of the cytochrome b6-f complex, which mediates electron transfer between photosystem II (PSII) and photosystem I (PSI), cyclic electron flow around PSI, and state transitions. This chain is Cytochrome b6-f complex subunit 7, found in Pyropia yezoensis (Susabi-nori).